A 124-amino-acid polypeptide reads, in one-letter code: MPTIQQLVRKGRQDKVSKNKTPALKGSPQRRGVCTRVYTTTPKKPNSALRKVARVRLSSGVEVTAYIPGVGHNLQEHSIVLVRGGRVKDLPGVRYKIIRGTLDTQGVKNRKQARSRYGAKKEKS.

A disordered region spans residues 1–32; that stretch reads MPTIQQLVRKGRQDKVSKNKTPALKGSPQRRG. Aspartate 89 carries the 3-methylthioaspartic acid modification.

This sequence belongs to the universal ribosomal protein uS12 family. As to quaternary structure, part of the 30S ribosomal subunit. Contacts proteins S8 and S17. May interact with IF1 in the 30S initiation complex.

In terms of biological role, with S4 and S5 plays an important role in translational accuracy. Interacts with and stabilizes bases of the 16S rRNA that are involved in tRNA selection in the A site and with the mRNA backbone. Located at the interface of the 30S and 50S subunits, it traverses the body of the 30S subunit contacting proteins on the other side and probably holding the rRNA structure together. The combined cluster of proteins S8, S12 and S17 appears to hold together the shoulder and platform of the 30S subunit. The sequence is that of Small ribosomal subunit protein uS12 from Nocardioides sp. (strain ATCC BAA-499 / JS614).